We begin with the raw amino-acid sequence, 68 residues long: UPF0352 protein CPS_2611 (68 aa).

It belongs to the UPF0352 family.

The chain is UPF0352 protein CPS_2611 from Colwellia psychrerythraea (strain 34H / ATCC BAA-681) (Vibrio psychroerythus).